Here is a 164-residue protein sequence, read N- to C-terminus: Small ribosomal subunit protein uS5 (164 aa).

In terms of domain architecture, S5 DRBM spans 10 to 73 (LEERVVAINR…EAAKKNLIEV (64 aa)).

The protein belongs to the universal ribosomal protein uS5 family. As to quaternary structure, part of the 30S ribosomal subunit. Contacts proteins S4 and S8.

With S4 and S12 plays an important role in translational accuracy. In terms of biological role, located at the back of the 30S subunit body where it stabilizes the conformation of the head with respect to the body. The chain is Small ribosomal subunit protein uS5 from Streptococcus thermophilus (strain CNRZ 1066).